Here is a 315-residue protein sequence, read N- to C-terminus: Diacylglycerol kinase (315 aa).

Residues 1–132 form the DAGKc domain; that stretch reads MRKRARIIYN…VDIGKMNNRY (132 aa). Residues 10–14, Thr41, 67–73, and Thr94 each bind ATP; these read NPTSG and GDGTLNE. Positions 213, 216, and 218 each coordinate Mg(2+). Glu273 (proton acceptor) is an active-site residue.

This sequence belongs to the diacylglycerol/lipid kinase family. Homodimer. It depends on Mg(2+) as a cofactor.

The catalysed reaction is a 1,2-diacyl-sn-glycerol + ATP = a 1,2-diacyl-sn-glycero-3-phosphate + ADP + H(+). Catalyzes the phosphorylation of diacylglycerol (DAG) into phosphatidic acid. Is a key enzyme involved in the production of lipoteichoic acid by reintroducing DAG formed from the breakdown of membrane phospholipids into the phosphatidylglycerol biosynthetic pathway. The chain is Diacylglycerol kinase (dagK) from Staphylococcus aureus (strain USA300 / TCH1516).